The sequence spans 289 residues: Acetylglutamate kinase (289 aa).

Substrate contacts are provided by residues glycine 60–glycine 61, arginine 82, and asparagine 186.

Belongs to the acetylglutamate kinase family. ArgB subfamily.

The protein localises to the cytoplasm. It catalyses the reaction N-acetyl-L-glutamate + ATP = N-acetyl-L-glutamyl 5-phosphate + ADP. Its pathway is amino-acid biosynthesis; L-arginine biosynthesis; N(2)-acetyl-L-ornithine from L-glutamate: step 2/4. Catalyzes the ATP-dependent phosphorylation of N-acetyl-L-glutamate. This Methanoculleus marisnigri (strain ATCC 35101 / DSM 1498 / JR1) protein is Acetylglutamate kinase.